Consider the following 252-residue polypeptide: Chitooligosaccharide deacetylase (252 aa).

Mg(2+) is bound by residues histidine 61 and histidine 125.

The protein belongs to the YdjC deacetylase family. ChbG subfamily. As to quaternary structure, homodimer. Mg(2+) is required as a cofactor.

The protein resides in the cytoplasm. The catalysed reaction is N,N'-diacetylchitobiose + H2O = N-acetyl-beta-D-glucosaminyl-(1-&gt;4)-D-glucosamine + acetate. The enzyme catalyses diacetylchitobiose-6'-phosphate + H2O = N'-monoacetylchitobiose-6'-phosphate + acetate. It participates in glycan degradation; chitin degradation. In terms of biological role, involved in the degradation of chitin. ChbG is essential for growth on the acetylated chitooligosaccharides chitobiose and chitotriose but is dispensable for growth on cellobiose and chitosan dimer, the deacetylated form of chitobiose. Deacetylation of chitobiose-6-P and chitotriose-6-P is necessary for both the activation of the chb promoter by the regulatory protein ChbR and the hydrolysis of phosphorylated beta-glucosides by the phospho-beta-glucosidase ChbF. Catalyzes the removal of only one acetyl group from chitobiose-6-P to yield monoacetylchitobiose-6-P, the inducer of ChbR and the substrate of ChbF. In Enterobacter sp. (strain 638), this protein is Chitooligosaccharide deacetylase.